The sequence spans 498 residues: WD repeat-containing protein 55 homolog (498 aa).

Positions 1–131 (MHTHNNFKTP…ATFDLDEDDE (131 aa)) are disordered. 2 stretches are compositionally biased toward acidic residues: residues 12–23 (DEDELDDLDEDM) and 31–48 (IEQE…EYDL). 6 WD repeats span residues 154 to 193 (KLED…NKLL), 198 to 237 (VHSK…LKKL), 241 to 279 (AHDD…AIFE), 282 to 321 (ELED…MYVQ), 324 to 363 (PYEE…YHCD), and 408 to 447 (QHNM…DFGE).

It belongs to the WD repeat WDR55 family.

The sequence is that of WD repeat-containing protein 55 homolog from Drosophila simulans (Fruit fly).